Reading from the N-terminus, the 371-residue chain is tRNA-specific 2-thiouridylase MnmA (371 aa).

ATP is bound by residues 16-23 and M42; that span reads GMSGGVDS. The interval 102–104 is interaction with target base in tRNA; sequence NPD. C107 acts as the Nucleophile in catalysis. Cysteines 107 and 204 form a disulfide. G132 contributes to the ATP binding site. The interval 154–156 is interaction with tRNA; sequence KDQ. The active-site Cysteine persulfide intermediate is the C204. The tract at residues 316–317 is interaction with tRNA; the sequence is RY.

The protein belongs to the MnmA/TRMU family.

The protein localises to the cytoplasm. The catalysed reaction is S-sulfanyl-L-cysteinyl-[protein] + uridine(34) in tRNA + AH2 + ATP = 2-thiouridine(34) in tRNA + L-cysteinyl-[protein] + A + AMP + diphosphate + H(+). In terms of biological role, catalyzes the 2-thiolation of uridine at the wobble position (U34) of tRNA, leading to the formation of s(2)U34. This Shewanella piezotolerans (strain WP3 / JCM 13877) protein is tRNA-specific 2-thiouridylase MnmA.